The chain runs to 153 residues: IAA acetyltransferase (153 aa).

One can recognise an N-acetyltransferase domain in the interval 4–153; it reads VTIARESPLQ…PLSLFMEKPL (150 aa).

In terms of biological role, participates in the tryptophan-dependent indole-3-acetic acid production, which is a phytohormone released by A.brasilense. This Azospirillum brasilense protein is IAA acetyltransferase.